Here is a 468-residue protein sequence, read N- to C-terminus: UDP-N-acetylmuramoyl-L-alanine--L-glutamate ligase (468 aa).

Residue 122–128 participates in ATP binding; it reads GTKGKST.

This sequence belongs to the MurCDEF family. MurD2 subfamily.

The protein localises to the cytoplasm. It catalyses the reaction UDP-N-acetyl-alpha-D-muramoyl-L-alanine + L-glutamate + ATP = UDP-N-acetyl-alpha-D-muramoyl-L-alanyl-L-glutamate + ADP + phosphate + H(+). Its pathway is cell wall biogenesis; peptidoglycan biosynthesis. Cell wall formation. Catalyzes the addition of L-glutamate to the nucleotide precursor UDP-N-acetylmuramoyl-L-alanine. In Xanthomonas campestris pv. campestris (strain 8004), this protein is UDP-N-acetylmuramoyl-L-alanine--L-glutamate ligase.